The sequence spans 225 residues: MAGPASVAGDVFVDALPYFDQGYDATGVREAAAALVEEETRRYRPTKNYLSYLPTPDFSAFETEIMRNEFERLAARQPMELLSMKRYELPAPSSGQKNDMTAWQDCVNNSMAQLEHQAVRIENLELMAQYGTNAWKMSNDNLALMIENSQKELQNVRKEIQDLNWQRKNDQLAGGAKLRELESNWVSLVSKNYEIERAIVQLENEVAQMKQQQGDENKENIRQDF.

The stretch at 138–222 (SNDNLALMIE…QGDENKENIR (85 aa)) forms a coiled coil.

This sequence belongs to the SPF27 family. Component of the pre-catalytic and catalytic spliceosome complexes. Component of the postcatalytic spliceosome P complex.

Its subcellular location is the nucleus. Required for pre-mRNA splicing as component of the activated spliceosome. May have a scaffolding role in the spliceosome assembly as it contacts all other components of the core complex. This Danio rerio (Zebrafish) protein is Pre-mRNA-splicing factor SPF27 (bcas2).